The chain runs to 313 residues: Nucleotide-binding protein Swit_0399 (313 aa).

20–27 lines the ATP pocket; it reads GMSGSGKK. 73–76 provides a ligand contact to GTP; sequence DSRT. The tract at residues 289–313 is disordered; the sequence is PTVRHRDLTRQKSNAEESTVPGVGS. Positions 292–303 are enriched in basic and acidic residues; sequence RHRDLTRQKSNA.

The protein belongs to the RapZ-like family.

In terms of biological role, displays ATPase and GTPase activities. In Rhizorhabdus wittichii (strain DSM 6014 / CCUG 31198 / JCM 15750 / NBRC 105917 / EY 4224 / RW1) (Sphingomonas wittichii), this protein is Nucleotide-binding protein Swit_0399.